Reading from the N-terminus, the 394-residue chain is RILP-like protein 1 (394 aa).

Positions 2–89 (EGISALEKNV…RLERMDRIEK (88 aa)) constitute an RH1 domain. Residues 68 to 312 (EMEELRLELD…KVFMLQEELA (245 aa)) adopt a coiled-coil conformation. The region spanning 282-347 (RPRFTLQELR…IPQESGIKRL (66 aa)) is the RH2 domain. The interval 318–337 (EADEEHKLPQSSPVIDSKAP) is disordered.

Belongs to the RILPL family.

The protein resides in the cytoplasm. It is found in the cytosol. The protein localises to the cytoskeleton. It localises to the microtubule organizing center. Its subcellular location is the centrosome. The protein resides in the cell projection. It is found in the cilium. Functionally, plays a role in the regulation of cell shape and polarity. Plays a role in cellular protein transport, including protein transport away from primary cilia. Neuroprotective protein. This chain is RILP-like protein 1 (rilpl1), found in Xenopus tropicalis (Western clawed frog).